Reading from the N-terminus, the 392-residue chain is Probable myosin light chain kinase DDB_G0271550 (392 aa).

Residues 20 to 278 (YEFGPEIGRG…ASQCIKHPWL (259 aa)) enclose the Protein kinase domain. Residues 26-34 (IGRGAFSIV) and Lys49 each bind ATP. Catalysis depends on Asp142, which acts as the Proton acceptor. Polar residues predominate over residues 317–326 (SQSTPNLHSA). The segment at 317–392 (SQSTPNLHSA…NNNNNNNNNI (76 aa)) is disordered. Positions 327 to 392 (NSNTNTNSLS…NNNNNNNNNI (66 aa)) are enriched in low complexity.

The protein belongs to the protein kinase superfamily. CAMK Ser/Thr protein kinase family. CaMK subfamily.

It catalyses the reaction L-seryl-[myosin light chain] + ATP = O-phospho-L-seryl-[myosin light chain] + ADP + H(+). The catalysed reaction is L-threonyl-[myosin light chain] + ATP = O-phospho-L-threonyl-[myosin light chain] + ADP + H(+). Functionally, may phosphorylate a specific serine in the N-terminus of a myosin light chain. The protein is Probable myosin light chain kinase DDB_G0271550 of Dictyostelium discoideum (Social amoeba).